The primary structure comprises 152 residues: Ribosome maturation factor RimP (152 aa).

Belongs to the RimP family.

It localises to the cytoplasm. Required for maturation of 30S ribosomal subunits. The polypeptide is Ribosome maturation factor RimP (Escherichia coli (strain K12 / MC4100 / BW2952)).